The sequence spans 691 residues: Protein phosphatase 1 regulatory subunit 37 (691 aa).

Residues 1 to 43 (MEIAPQEAPPVPGADGDIEEAPAEAGSPSPASPPADGRLKAAA) are disordered. 2 positions are modified to phosphoserine: serine 50 and serine 56. LRR repeat units lie at residues 220-240 (SLAVLHLENASLSGRPLMLLA), 248-269 (NLRELYLADNKLNGLQDSAQLG), 277-297 (SLQILDLRNNHVLDSGLAYIC), 306-326 (GLVTLVLWNNQLTHTGMAFLG), and 334-354 (SLETLNLGHNPIGNEGVRHLK). Positions 460–662 (EREEKEQPPQ…PEVKGGSCGL (203 aa)) are disordered. The span at 468-481 (PQLSASMPETTATE) shows a compositional bias: polar residues. Positions 505–523 (SDSDSDSDGEEEEEEEGER) are enriched in acidic residues. Serine 561 is subject to Phosphoserine. Pro residues-rich tracts occupy residues 584–605 (PASPTPPSPPPPPSPPASPSLP) and 620–634 (PQPPPEPPRSGPPLP).

This sequence belongs to the PPP1R37 family. Interacts with PPP1CA.

In terms of biological role, inhibits phosphatase activity of protein phosphatase 1 (PP1) complexes. The chain is Protein phosphatase 1 regulatory subunit 37 (PPP1R37) from Homo sapiens (Human).